Reading from the N-terminus, the 142-residue chain is Large ribosomal subunit protein uL13 (142 aa).

Belongs to the universal ribosomal protein uL13 family. In terms of assembly, part of the 50S ribosomal subunit.

Functionally, this protein is one of the early assembly proteins of the 50S ribosomal subunit, although it is not seen to bind rRNA by itself. It is important during the early stages of 50S assembly. This is Large ribosomal subunit protein uL13 from Burkholderia pseudomallei (strain 1106a).